Here is a 53-residue protein sequence, read N- to C-terminus: Large ribosomal subunit protein eL24 (53 aa).

Residues Cys4, Cys7, Cys30, and Cys34 each contribute to the Zn(2+) site. Residues 4-34 (CSFCHEEIEPGTGKMYVKRDGTIYFFCSSKC) form a C4-type zinc finger.

The protein belongs to the eukaryotic ribosomal protein eL24 family. In terms of assembly, part of the 50S ribosomal subunit. Forms a cluster with proteins L3 and L14. Zn(2+) is required as a cofactor.

Its function is as follows. Binds to the 23S rRNA. The sequence is that of Large ribosomal subunit protein eL24 from Methanothermobacter thermautotrophicus (strain ATCC 29096 / DSM 1053 / JCM 10044 / NBRC 100330 / Delta H) (Methanobacterium thermoautotrophicum).